We begin with the raw amino-acid sequence, 834 residues long: Glycerol-3-phosphate acyltransferase (834 aa).

An HXXXXD motif motif is present at residues 309-314; sequence CHRSHI.

This sequence belongs to the GPAT/DAPAT family.

Its subcellular location is the cell inner membrane. The catalysed reaction is sn-glycerol 3-phosphate + an acyl-CoA = a 1-acyl-sn-glycero-3-phosphate + CoA. It participates in phospholipid metabolism; CDP-diacylglycerol biosynthesis; CDP-diacylglycerol from sn-glycerol 3-phosphate: step 1/3. This is Glycerol-3-phosphate acyltransferase from Pseudomonas aeruginosa (strain UCBPP-PA14).